The chain runs to 155 residues: Protein FAM201A (155 aa).

The interval 130–155 (QDQGCGQHRPHSPRLVDIALPGGGWT) is disordered.

In Homo sapiens (Human), this protein is Protein FAM201A (FAM201A).